Here is a 311-residue protein sequence, read N- to C-terminus: Putative S-adenosyl-L-methionine-dependent methyltransferase MUL_4761 (311 aa).

Residues D132 and 161–162 (DL) each bind S-adenosyl-L-methionine.

It belongs to the UPF0677 family.

Exhibits S-adenosyl-L-methionine-dependent methyltransferase activity. This Mycobacterium ulcerans (strain Agy99) protein is Putative S-adenosyl-L-methionine-dependent methyltransferase MUL_4761.